A 353-amino-acid polypeptide reads, in one-letter code: N-acetyl-gamma-glutamyl-phosphate reductase (353 aa).

Cysteine 155 is an active-site residue.

The protein belongs to the NAGSA dehydrogenase family. Type 1 subfamily.

The protein localises to the cytoplasm. It catalyses the reaction N-acetyl-L-glutamate 5-semialdehyde + phosphate + NADP(+) = N-acetyl-L-glutamyl 5-phosphate + NADPH + H(+). The protein operates within amino-acid biosynthesis; L-arginine biosynthesis; N(2)-acetyl-L-ornithine from L-glutamate: step 3/4. In terms of biological role, catalyzes the NADPH-dependent reduction of N-acetyl-5-glutamyl phosphate to yield N-acetyl-L-glutamate 5-semialdehyde. This chain is N-acetyl-gamma-glutamyl-phosphate reductase, found in Microcystis aeruginosa (strain NIES-843 / IAM M-2473).